Consider the following 187-residue polypeptide: dITP/XTP pyrophosphatase (187 aa).

7–12 (TGNKHK) serves as a coordination point for substrate. Mg(2+) is bound by residues Glu36 and Asp64. The Proton acceptor role is filled by Asp64. Substrate-binding positions include Ala65, 140 to 143 (FAFD), Lys163, and 168 to 169 (HR).

This sequence belongs to the HAM1 NTPase family. Homodimer. The cofactor is Mg(2+).

It catalyses the reaction XTP + H2O = XMP + diphosphate + H(+). It carries out the reaction dITP + H2O = dIMP + diphosphate + H(+). The catalysed reaction is ITP + H2O = IMP + diphosphate + H(+). Functionally, pyrophosphatase that catalyzes the hydrolysis of nucleoside triphosphates to their monophosphate derivatives, with a high preference for the non-canonical purine nucleotides XTP (xanthosine triphosphate), dITP (deoxyinosine triphosphate) and ITP. Seems to function as a house-cleaning enzyme that removes non-canonical purine nucleotides from the nucleotide pool, thus preventing their incorporation into DNA/RNA and avoiding chromosomal lesions. The sequence is that of dITP/XTP pyrophosphatase from Methanothermobacter marburgensis (strain ATCC BAA-927 / DSM 2133 / JCM 14651 / NBRC 100331 / OCM 82 / Marburg) (Methanobacterium thermoautotrophicum).